Consider the following 114-residue polypeptide: UPF0342 protein LCABL_19440 (114 aa).

The protein belongs to the UPF0342 family.

The polypeptide is UPF0342 protein LCABL_19440 (Lacticaseibacillus casei (strain BL23) (Lactobacillus casei)).